The sequence spans 890 residues: UPF0182 protein SYNW1212 (890 aa).

Transmembrane regions (helical) follow at residues Trp21–Trp41, Leu64–Ile84, Trp98–Val118, Ala134–Leu154, Phe173–Asn193, Arg219–Ser239, Leu268–Leu288, and Val295–Leu315.

Belongs to the UPF0182 family.

It localises to the cell membrane. The sequence is that of UPF0182 protein SYNW1212 from Parasynechococcus marenigrum (strain WH8102).